A 152-amino-acid chain; its full sequence is ARL14 effector protein-like (152 aa).

Residues 1–21 (MNEQSEKNNSIQERHTDHSFP) form a disordered region.

This Homo sapiens (Human) protein is ARL14 effector protein-like (ARL14EPL).